A 90-amino-acid polypeptide reads, in one-letter code: Conotoxin ba9a (90 aa).

The signal sequence occupies residues 1–27; that stretch reads MHLSLARSAGLMWLLLFAVGNFVGVQP. The propeptide occupies 28–62; that stretch reads GQITRDVDNGQLADNRRNLQSLRKPMTLFKSLNKR. The residue at position 67 (E67) is a 4-carboxyglutamate. P76 and P80 each carry 4-hydroxyproline.

In terms of tissue distribution, expressed by the venom duct.

It localises to the secreted. In Conus bayani (Bayan's cone), this protein is Conotoxin ba9a.